Reading from the N-terminus, the 161-residue chain is Regulator of ribonuclease activity A (161 aa).

The protein belongs to the RraA family. Homotrimer. Binds to both RNA-binding sites in the C-terminal region of Rne and to RhlB.

Its subcellular location is the cytoplasm. In terms of biological role, globally modulates RNA abundance by binding to RNase E (Rne) and regulating its endonucleolytic activity. Can modulate Rne action in a substrate-dependent manner by altering the composition of the degradosome. Modulates RNA-binding and helicase activities of the degradosome. This Pectobacterium atrosepticum (strain SCRI 1043 / ATCC BAA-672) (Erwinia carotovora subsp. atroseptica) protein is Regulator of ribonuclease activity A.